The sequence spans 271 residues: MQQFAVFGHPIKHSQSPRIHRLFAQQTGIALSYEAMLAPLDDFPAFAMAFFQQGGRGANVTTPFKEQAWQMADVLTPRARLAGAVNTLHWQNARLLGDNTDGVGLVSDLHRLAMIGDASRVLLLGAGGAARGVILPLLEQGCRIALANRTHARAQALAAAFQAQGAIEALPYDALGTHTFDLIINATASGLQGELPPLPRSIIRPDCACYDMFYRAGATPFLAWVQQQGAVRLADGFGMLVAQAAHAFSLWHGIMPQIAPVLIQLRQEPVG.

Shikimate contacts are provided by residues 14-16 (SQS) and Thr61. Lys65 (proton acceptor) is an active-site residue. Shikimate-binding residues include Asn86 and Asp101. NADP(+) is bound by residues 125–129 (GAGGA), 148–153 (NRTHAR), and Met212. Tyr214 contributes to the shikimate binding site. NADP(+) is bound at residue Gly236.

Belongs to the shikimate dehydrogenase family. In terms of assembly, homodimer.

It catalyses the reaction shikimate + NADP(+) = 3-dehydroshikimate + NADPH + H(+). It participates in metabolic intermediate biosynthesis; chorismate biosynthesis; chorismate from D-erythrose 4-phosphate and phosphoenolpyruvate: step 4/7. Its function is as follows. Involved in the biosynthesis of the chorismate, which leads to the biosynthesis of aromatic amino acids. Catalyzes the reversible NADPH linked reduction of 3-dehydroshikimate (DHSA) to yield shikimate (SA). The protein is Shikimate dehydrogenase (NADP(+)) of Edwardsiella ictaluri (strain 93-146).